The sequence spans 447 residues: Teichoic acids export ATP-binding protein TagH (447 aa).

The region spanning 24 to 246 (DKLKTLFSVF…YRAFLHRYNH (223 aa)) is the ABC transporter domain. An ATP-binding site is contributed by 60–67 (GLNGSGKS). The tract at residues 247–447 (FTEPQKESYQ…QVLKLKEVTE (201 aa)) is unknown. Positions 359–393 (NAVKTTKTKPASTKESRQQEEVQPSPTNVPENNNS) are disordered. Composition is skewed to polar residues over residues 360 to 369 (AVKTTKTKPA) and 379 to 393 (EVQP…NNNS). The LysM domain occupies 398-442 (STYTVEVGDSVSLIAENHGLTIEQLQTLNPEIIEVPIYPGQVLKL).

It belongs to the ABC transporter superfamily. Teichoic acids exporter (TC 3.A.1.104.1) family. The complex is composed of two ATP-binding proteins (TagH) and two transmembrane proteins (TagG).

The protein resides in the cell membrane. The catalysed reaction is ATP + H2O + teichoic acidSide 1 = ADP + phosphate + teichoic acidSide 2.. Its function is as follows. Part of the ABC transporter complex TagGH involved in teichoic acids export. Responsible for energy coupling to the transport system. The chain is Teichoic acids export ATP-binding protein TagH from Enterococcus faecalis (strain ATCC 700802 / V583).